The chain runs to 430 residues: MAAAAEQQQQQQQQGFRPLDEASLVAYIKATPALAARLGGSLDALTIKEVGDGNLNFVYIVLSDAGSVVIKQALPYIRCVGDSWPMTRERAYFEASALQKHRGLCPDHVPEVYHFDRAMSLIGMRYIEPPHIILRKGLIAGVEYPLLAEHMADYMAKTLFFTSLLYNSTTDHKKGVAQYCDNVEMCRLTEQVVFSDPYMLAKYNRCTSPFLDNDAAAVREDAELKLEIAELKSMFIERAQALLHGDLHTGSIMVTPDSTQVIDPEFAFYGPMGYDIGAFLGNLILAYFSQDGHADQANDRKAYKKWILKTIEDSWNLFHKKFVELWNKHKDGNGEAYLPPIYNSSELLCLAQKKYMTSLFHDSLGFGSAKMIRRIVGIAHVEDFESIEDASKRASCERRALNCAKAILKGRRQFESIGQVIVHVQSFDRD.

Residues 52–56 (DGNLN), Lys71, and 125–127 (RYI) contribute to the ATP site. Asn56 is a binding site for substrate. Position 246 (Asp246) interacts with substrate. Residue 263–265 (DPE) participates in ATP binding. Arg373 is a substrate binding site.

Belongs to the methylthioribose kinase family. In terms of assembly, homodimer.

It catalyses the reaction 5-(methylsulfanyl)-D-ribose + ATP = 5-(methylsulfanyl)-alpha-D-ribose 1-phosphate + ADP + H(+). Its pathway is amino-acid biosynthesis; L-methionine biosynthesis via salvage pathway; S-methyl-5-thio-alpha-D-ribose 1-phosphate from S-methyl-5'-thioadenosine (hydrolase route): step 2/2. Catalyzes the phosphorylation of methylthioribose into methylthioribose-1-phosphate. This Oryza sativa subsp. japonica (Rice) protein is Methylthioribose kinase 1.